The chain runs to 79 residues: Small ribosomal subunit protein bS18 (79 aa).

Belongs to the bacterial ribosomal protein bS18 family. Part of the 30S ribosomal subunit. Forms a tight heterodimer with protein bS6.

Its function is as follows. Binds as a heterodimer with protein bS6 to the central domain of the 16S rRNA, where it helps stabilize the platform of the 30S subunit. The sequence is that of Small ribosomal subunit protein bS18 from Ureaplasma parvum serovar 3 (strain ATCC 27815 / 27 / NCTC 11736).